Here is a 436-residue protein sequence, read N- to C-terminus: ATP-dependent RNA helicase RhlB (436 aa).

The Q motif motif lies at 9-37; it reads QKFADFPLHKEVHQALNEAGFEFCTPIQA. One can recognise a Helicase ATP-binding domain in the interval 40 to 219; that stretch reads LPILLEKKDI…YDHMNEPEKV (180 aa). 53–60 contributes to the ATP binding site; the sequence is AQTGTGKT. The DEAD box signature appears at 165-168; sequence DEAD. Residues 243-390 enclose the Helicase C-terminal domain; the sequence is KMPLLLSLLE…VTSYDSDALL (148 aa). The interval 392–436 is disordered; it reads DIPPPVRIHRKPSTHTRNTRDRSSGRPQGGQRNGPRRHDKTRRHS. Basic residues predominate over residues 425–436; it reads GPRRHDKTRRHS.

It belongs to the DEAD box helicase family. RhlB subfamily. In terms of assembly, component of the RNA degradosome, which is a multiprotein complex involved in RNA processing and mRNA degradation.

Its subcellular location is the cytoplasm. It catalyses the reaction ATP + H2O = ADP + phosphate + H(+). Functionally, DEAD-box RNA helicase involved in RNA degradation. Has RNA-dependent ATPase activity and unwinds double-stranded RNA. The polypeptide is ATP-dependent RNA helicase RhlB (Shewanella pealeana (strain ATCC 700345 / ANG-SQ1)).